Consider the following 502-residue polypeptide: ATP synthase subunit alpha (502 aa).

169–176 (GDRQTGKT) contacts ATP.

It belongs to the ATPase alpha/beta chains family. F-type ATPases have 2 components, CF(1) - the catalytic core - and CF(0) - the membrane proton channel. CF(1) has five subunits: alpha(3), beta(3), gamma(1), delta(1), epsilon(1). CF(0) has three main subunits: a(1), b(2) and c(9-12). The alpha and beta chains form an alternating ring which encloses part of the gamma chain. CF(1) is attached to CF(0) by a central stalk formed by the gamma and epsilon chains, while a peripheral stalk is formed by the delta and b chains.

It is found in the cell membrane. It carries out the reaction ATP + H2O + 4 H(+)(in) = ADP + phosphate + 5 H(+)(out). Produces ATP from ADP in the presence of a proton gradient across the membrane. The alpha chain is a regulatory subunit. The protein is ATP synthase subunit alpha of Desulfitobacterium hafniense (strain Y51).